Reading from the N-terminus, the 447-residue chain is Rab GDP dissociation inhibitor alpha (447 aa).

This sequence belongs to the Rab GDI family. As to quaternary structure, interacts with RHOH. Interacts with the non-phosphorylated forms of RAB1A, RAB3A, RAB5A, RAB5B, RAB5C, RAB8A, RAB8B, RAB10, RAB12, RAB35, and RAB43.

The protein localises to the cytoplasm. The protein resides in the golgi apparatus. It localises to the trans-Golgi network. Functionally, regulates the GDP/GTP exchange reaction of most Rab proteins by inhibiting the dissociation of GDP from them, and the subsequent binding of GTP to them. Promotes the dissociation of GDP-bound Rab proteins from the membrane and inhibits their activation. Promotes the dissociation of RAB1A, RAB3A, RAB5A and RAB10 from membranes. This is Rab GDP dissociation inhibitor alpha (GDI1) from Macaca fascicularis (Crab-eating macaque).